Reading from the N-terminus, the 323-residue chain is Queuosine 5'-phosphate N-glycosylase/hydrolase (323 aa).

Asn-72, Tyr-93, Lys-199, Phe-229, Asp-231, Asp-298, Trp-302, and Gln-306 together coordinate queuosine 5'-phosphate. Asp-231 functions as the Nucleophile or transition state stabilizer in the catalytic mechanism.

The protein belongs to the QNG1 protein family. Monomer.

The catalysed reaction is queuosine 5'-phosphate + H2O = queuine + D-ribose 5-phosphate. Catalyzes the hydrolysis of queuosine 5'-phosphate, releasing the nucleobase queuine (q). Is likely required for salvage of queuine from exogenous queuosine (Q) that is imported and then converted to queuosine 5'-phosphate intracellularly. In vitro, can also catalyze the release of the q base directly from Q as substrate; however, Q may not be the biologically relevant substrate. Shows a very low activity on queuosine 3',5'-diphosphate, and cannot release q from queuosine 3'-phosphate and from the 5'-nucleotides AMP, UMP, CMP or GMP, indicating specificity for the queuine base. The protein is Queuosine 5'-phosphate N-glycosylase/hydrolase of Sphaerobacter thermophilus (strain ATCC 49802 / DSM 20745 / KCCM 41009 / NCIMB 13125 / S 6022).